The following is a 469-amino-acid chain: Glutamate--tRNA ligase (469 aa).

A 'HIGH' region motif is present at residues 9–19; sequence PSPTGFLHVGG. C98, C100, C125, and D127 together coordinate Zn(2+). The 'KMSKS' region motif lies at 236–240; that stretch reads KLSKR. K239 provides a ligand contact to ATP.

The protein belongs to the class-I aminoacyl-tRNA synthetase family. Glutamate--tRNA ligase type 1 subfamily. Monomer. Requires Zn(2+) as cofactor.

The protein resides in the cytoplasm. It carries out the reaction tRNA(Glu) + L-glutamate + ATP = L-glutamyl-tRNA(Glu) + AMP + diphosphate. Its function is as follows. Catalyzes the attachment of glutamate to tRNA(Glu) in a two-step reaction: glutamate is first activated by ATP to form Glu-AMP and then transferred to the acceptor end of tRNA(Glu). This is Glutamate--tRNA ligase from Shewanella woodyi (strain ATCC 51908 / MS32).